The following is a 315-amino-acid chain: Porphobilinogen deaminase (315 aa).

Cys-245 is subject to S-(dipyrrolylmethanemethyl)cysteine.

It belongs to the HMBS family. In terms of assembly, monomer. Dipyrromethane is required as a cofactor.

It catalyses the reaction 4 porphobilinogen + H2O = hydroxymethylbilane + 4 NH4(+). It participates in porphyrin-containing compound metabolism; protoporphyrin-IX biosynthesis; coproporphyrinogen-III from 5-aminolevulinate: step 2/4. Its pathway is porphyrin-containing compound metabolism; chlorophyll biosynthesis. Tetrapolymerization of the monopyrrole PBG into the hydroxymethylbilane pre-uroporphyrinogen in several discrete steps. This chain is Porphobilinogen deaminase, found in Prochlorococcus marinus (strain NATL1A).